A 130-amino-acid polypeptide reads, in one-letter code: Small ribosomal subunit protein uS9 (130 aa).

Belongs to the universal ribosomal protein uS9 family.

The sequence is that of Small ribosomal subunit protein uS9 from Stenotrophomonas maltophilia (strain R551-3).